We begin with the raw amino-acid sequence, 539 residues long: GMP synthase [glutamine-hydrolyzing] (539 aa).

In terms of domain architecture, Glutamine amidotransferase type-1 spans 4 to 203 (KILILDFGSQ…VHDICGCKSD (200 aa)). The active-site Nucleophile is Cys82. Active-site residues include His177 and Glu179. The region spanning 204 to 395 (WNMPDYIAEA…LGLPHDMVYR (192 aa)) is the GMPS ATP-PPase domain. 231–237 (SGGVDSS) contributes to the ATP binding site.

As to quaternary structure, homodimer.

The catalysed reaction is XMP + L-glutamine + ATP + H2O = GMP + L-glutamate + AMP + diphosphate + 2 H(+). Its pathway is purine metabolism; GMP biosynthesis; GMP from XMP (L-Gln route): step 1/1. Its function is as follows. Catalyzes the synthesis of GMP from XMP. This is GMP synthase [glutamine-hydrolyzing] from Herminiimonas arsenicoxydans.